Here is a 164-residue protein sequence, read N- to C-terminus: MTYRVCFVCTGNICRSPMAEAVFRARVEDAGLGHLVEADSAGTGGWHEGEGADPRTEAVLADHGYGLDHAARQFQQSWFSRLDLVVALDAGHLRALRRLAPTERDAAKVRLLRSYDPAVAGGDLDVPDPYYGGRDGFEECLEMVEAASTGLLAAVREQVEGRAA.

The active-site Nucleophile is the Cys-9. Residue Arg-15 is part of the active site. Residue Asp-128 is the Proton donor of the active site.

Belongs to the low molecular weight phosphotyrosine protein phosphatase family.

The enzyme catalyses O-phospho-L-tyrosyl-[protein] + H2O = L-tyrosyl-[protein] + phosphate. Its function is as follows. Acts on tyrosine phosphorylated proteins, low-MW aryl phosphates and natural and synthetic acyl phosphates. May be involved in the regulation of sulfur amino acid metabolism. The protein is Low molecular weight protein-tyrosine-phosphatase (ptpA) of Streptomyces coelicolor (strain ATCC BAA-471 / A3(2) / M145).